The sequence spans 295 residues: Thioredoxin-related transmembrane protein 2 (295 aa).

Positions 1–48 (MAVLAPLIALVYSVPRLSRWLARPYCLLSALLSIAFLLVRKLPPICNG) are cleaved as a signal peptide. Residues 49 to 102 (LPTQREDGNPCDFDWREVEILMFLSAIVMMKNRRSITVEQHVGNIFMFSKVANA) lie on the Extracellular side of the membrane. The chain crosses the membrane as a helical span at residues 103–125 (ILFFRLDIRMGLLYLTLCIVFLM). The Thioredoxin domain occupies 114-269 (LLYLTLCIVF…LYQRAKKLSK (156 aa)). At 126–295 (TCKPPLYMGP…VPDGENKKDK (170 aa)) the chain is on the cytoplasmic side. 2 positions are modified to phosphoserine: S211 and S243. The interval 266-295 (KLSKGGDMSEEKPGNPTPTAVPDGENKKDK) is disordered. Positions 292–295 (KKDK) match the Di-lysine motif motif.

In terms of assembly, monomer. Homodimer; disulfide-linked. Occurs in both reduced and oxidized monomeric form. Oxidative conditions increase homodimerization. Interacts with CANX. Interacts with ATP2A2.

The protein resides in the endoplasmic reticulum membrane. The protein localises to the mitochondrion membrane. In terms of biological role, endoplasmic reticulum and mitochondria-associated protein that probably functions as a regulator of cellular redox state and thereby regulates protein post-translational modification, protein folding and mitochondrial activity. Indirectly regulates neuronal proliferation, migration, and organization in the developing brain. The sequence is that of Thioredoxin-related transmembrane protein 2 (Tmx2) from Rattus norvegicus (Rat).